The chain runs to 677 residues: Protein PALS1 (677 aa).

Residues 1–347 (MTTSHMNGYV…AQIKSPPIKE (347 aa)) form a required for the correct localization of PALS1 and PATJ at cell-cell contacts and the normal formation of tight junctions and adherens junctions region. Residues 39-81 (ELGARTLPVRRSAQLEKIRQQQEDRRRREEEGRSRQELDLNSS) are disordered. Positions 51–76 (AQLEKIRQQQEDRRRREEEGRSRQEL) are enriched in basic and acidic residues. L27 domains are found at residues 121–178 (ALLE…NRPS) and 180–236 (PYPL…MQLE). The 81-residue stretch at 258-338 (IVRIEKAKDI…VLSFVLIPSA (81 aa)) folds into the PDZ domain. Residues 347–419 (ETVVHVKAHF…PGKSFQQQRE (73 aa)) form the SH3 domain. Residues 481-662 (KRPIALIGPP…SYQELLRLIN (182 aa)) enclose the Guanylate kinase-like domain. 488-495 (GPPNCGQN) is an ATP binding site. Residues 506–526 (PDRFAGPVPHTTRSRRDAEAN) form a disordered region.

This sequence belongs to the MAGUK family. In terms of tissue distribution, expressed in the retina and in the neural tube.

The protein localises to the apical cell membrane. It is found in the cell junction. The protein resides in the tight junction. Plays a role in tight junction biogenesis and in the establishment of cell polarity in epithelial cells. Also involved in adherens junction biogenesis. Required for polarized epithelial organization, cell-cell adhesion and remodeling of myocardial cells during heart tube elongation during embryogenesis. Functions in cellular patterning of the retina and development of the retinal pigmented epithelium. Also required for embryo body axis specification. This is Protein PALS1 (pals1a) from Danio rerio (Zebrafish).